The following is a 31-amino-acid chain: Cytochrome b6-f complex subunit 6 (31 aa).

The helical transmembrane segment at 5–25 (ISYLGILVGALLFVTITFLTL) threads the bilayer.

Belongs to the PetL family. As to quaternary structure, the 4 large subunits of the cytochrome b6-f complex are cytochrome b6, subunit IV (17 kDa polypeptide, PetD), cytochrome f and the Rieske protein, while the 4 small subunits are PetG, PetL, PetM and PetN. The complex functions as a dimer.

It is found in the plastid. Its subcellular location is the chloroplast thylakoid membrane. Functionally, component of the cytochrome b6-f complex, which mediates electron transfer between photosystem II (PSII) and photosystem I (PSI), cyclic electron flow around PSI, and state transitions. PetL is important for photoautotrophic growth as well as for electron transfer efficiency and stability of the cytochrome b6-f complex. This Chlorokybus atmophyticus (Soil alga) protein is Cytochrome b6-f complex subunit 6.